The primary structure comprises 1412 residues: DNA-directed RNA polymerase subunit beta' (1412 aa).

Mg(2+) contacts are provided by aspartate 543, aspartate 545, and aspartate 547. 4 residues coordinate Zn(2+): cysteine 1017, cysteine 1092, cysteine 1099, and cysteine 1102.

This sequence belongs to the RNA polymerase beta' chain family. In terms of assembly, the RNAP catalytic core consists of 2 alpha, 1 beta, 1 beta' and 1 omega subunit. When a sigma factor is associated with the core the holoenzyme is formed, which can initiate transcription. The cofactor is Mg(2+). It depends on Zn(2+) as a cofactor.

The catalysed reaction is RNA(n) + a ribonucleoside 5'-triphosphate = RNA(n+1) + diphosphate. DNA-dependent RNA polymerase catalyzes the transcription of DNA into RNA using the four ribonucleoside triphosphates as substrates. The polypeptide is DNA-directed RNA polymerase subunit beta' (Mesomycoplasma hyopneumoniae (strain 232) (Mycoplasma hyopneumoniae)).